We begin with the raw amino-acid sequence, 390 residues long: Chorismate synthase 2 (390 aa).

NADP(+) contacts are provided by Arg-39 and Arg-45. FMN contacts are provided by residues 132-134 (RSS), 253-254 (NA), Gly-298, 313-317 (KPIPT), and Arg-339.

The protein belongs to the chorismate synthase family. Homotetramer. It depends on FMNH2 as a cofactor.

The catalysed reaction is 5-O-(1-carboxyvinyl)-3-phosphoshikimate = chorismate + phosphate. It participates in metabolic intermediate biosynthesis; chorismate biosynthesis; chorismate from D-erythrose 4-phosphate and phosphoenolpyruvate: step 7/7. Catalyzes the anti-1,4-elimination of the C-3 phosphate and the C-6 proR hydrogen from 5-enolpyruvylshikimate-3-phosphate (EPSP) to yield chorismate, which is the branch point compound that serves as the starting substrate for the three terminal pathways of aromatic amino acid biosynthesis. This reaction introduces a second double bond into the aromatic ring system. This chain is Chorismate synthase 2, found in Bacillus cereus (strain ATCC 10987 / NRS 248).